The primary structure comprises 435 residues: Methylenetetrahydrofolate--tRNA-(uracil-5-)-methyltransferase TrmFO (435 aa).

10–15 (GAGLAG) contributes to the FAD binding site.

The protein belongs to the MnmG family. TrmFO subfamily. The cofactor is FAD.

Its subcellular location is the cytoplasm. The catalysed reaction is uridine(54) in tRNA + (6R)-5,10-methylene-5,6,7,8-tetrahydrofolate + NADH + H(+) = 5-methyluridine(54) in tRNA + (6S)-5,6,7,8-tetrahydrofolate + NAD(+). The enzyme catalyses uridine(54) in tRNA + (6R)-5,10-methylene-5,6,7,8-tetrahydrofolate + NADPH + H(+) = 5-methyluridine(54) in tRNA + (6S)-5,6,7,8-tetrahydrofolate + NADP(+). In terms of biological role, catalyzes the folate-dependent formation of 5-methyl-uridine at position 54 (M-5-U54) in all tRNAs. This is Methylenetetrahydrofolate--tRNA-(uracil-5-)-methyltransferase TrmFO from Bacillus velezensis (strain DSM 23117 / BGSC 10A6 / LMG 26770 / FZB42) (Bacillus amyloliquefaciens subsp. plantarum).